The chain runs to 246 residues: Pyridoxine 5'-phosphate synthase (246 aa).

A 3-amino-2-oxopropyl phosphate-binding site is contributed by asparagine 12. 14-15 (DH) contacts 1-deoxy-D-xylulose 5-phosphate. Arginine 23 is a 3-amino-2-oxopropyl phosphate binding site. The active-site Proton acceptor is the histidine 48. Arginine 50 and histidine 55 together coordinate 1-deoxy-D-xylulose 5-phosphate. The active-site Proton acceptor is glutamate 75. A 1-deoxy-D-xylulose 5-phosphate-binding site is contributed by threonine 105. Residue histidine 196 is the Proton donor of the active site. Residues glycine 197 and 218 to 219 (GH) contribute to the 3-amino-2-oxopropyl phosphate site.

The protein belongs to the PNP synthase family. As to quaternary structure, homooctamer; tetramer of dimers.

It is found in the cytoplasm. It carries out the reaction 3-amino-2-oxopropyl phosphate + 1-deoxy-D-xylulose 5-phosphate = pyridoxine 5'-phosphate + phosphate + 2 H2O + H(+). The protein operates within cofactor biosynthesis; pyridoxine 5'-phosphate biosynthesis; pyridoxine 5'-phosphate from D-erythrose 4-phosphate: step 5/5. Its function is as follows. Catalyzes the complicated ring closure reaction between the two acyclic compounds 1-deoxy-D-xylulose-5-phosphate (DXP) and 3-amino-2-oxopropyl phosphate (1-amino-acetone-3-phosphate or AAP) to form pyridoxine 5'-phosphate (PNP) and inorganic phosphate. The sequence is that of Pyridoxine 5'-phosphate synthase from Pseudomonas syringae pv. tomato (strain ATCC BAA-871 / DC3000).